We begin with the raw amino-acid sequence, 384 residues long: Urea transporter 1 (384 aa).

The next 5 membrane-spanning stretches (helical) occupy residues Ile-61 to Leu-81, Pro-85 to Leu-105, Ala-111 to Phe-131, Phe-138 to Ala-158, and Leu-168 to His-188. A glycan (N-linked (GlcNAc...) asparagine) is linked at Asn-206. The next 4 membrane-spanning stretches (helical) occupy residues Leu-250–Ala-270, Gly-279–Leu-299, Leu-305–Met-325, and Ala-327–Leu-347.

This sequence belongs to the urea transporter family. As to quaternary structure, homotrimer; each subunit contains a pore through which urea permeates. Identified in a complex with STOM. In terms of tissue distribution, expressed in brain, spleen, kidney, testis and lung, with highest levels in brain.

The protein resides in the cell membrane. It is found in the basolateral cell membrane. It catalyses the reaction urea(in) = urea(out). Its function is as follows. Mediates the transport of urea driven by a concentration gradient across the cell membrane. Mediates the transport of urea across the cell membranes of erythrocytes and the renal inner medullary collecting duct which is critical to the urinary concentrating mechanism. Facilitates water transport in erythrocytes. This is Urea transporter 1 (Slc14a1) from Rattus norvegicus (Rat).